The following is a 225-amino-acid chain: 2-C-methyl-D-erythritol 4-phosphate cytidylyltransferase (225 aa).

It belongs to the IspD/TarI cytidylyltransferase family. IspD subfamily.

It carries out the reaction 2-C-methyl-D-erythritol 4-phosphate + CTP + H(+) = 4-CDP-2-C-methyl-D-erythritol + diphosphate. Its pathway is isoprenoid biosynthesis; isopentenyl diphosphate biosynthesis via DXP pathway; isopentenyl diphosphate from 1-deoxy-D-xylulose 5-phosphate: step 2/6. Catalyzes the formation of 4-diphosphocytidyl-2-C-methyl-D-erythritol from CTP and 2-C-methyl-D-erythritol 4-phosphate (MEP). The polypeptide is 2-C-methyl-D-erythritol 4-phosphate cytidylyltransferase (Haemophilus influenzae (strain PittGG)).